We begin with the raw amino-acid sequence, 157 residues long: Ribonuclease H (157 aa).

In terms of domain architecture, RNase H type-1 spans I5–E146. Positions 14, 52, 74, and 138 each coordinate Mg(2+).

Belongs to the RNase H family. In terms of assembly, monomer. Mg(2+) serves as cofactor.

The protein localises to the cytoplasm. It carries out the reaction Endonucleolytic cleavage to 5'-phosphomonoester.. Functionally, endonuclease that specifically degrades the RNA of RNA-DNA hybrids. This is Ribonuclease H from Aliivibrio salmonicida (strain LFI1238) (Vibrio salmonicida (strain LFI1238)).